A 118-amino-acid polypeptide reads, in one-letter code: Large ribosomal subunit protein bL20 (118 aa).

It belongs to the bacterial ribosomal protein bL20 family.

In terms of biological role, binds directly to 23S ribosomal RNA and is necessary for the in vitro assembly process of the 50S ribosomal subunit. It is not involved in the protein synthesizing functions of that subunit. In Pseudomonas fluorescens (strain ATCC BAA-477 / NRRL B-23932 / Pf-5), this protein is Large ribosomal subunit protein bL20.